We begin with the raw amino-acid sequence, 280 residues long: Acetyl-coenzyme A carboxylase carboxyl transferase subunit beta (280 aa).

The 253-residue stretch at isoleucine 28–glutamine 280 folds into the CoA carboxyltransferase N-terminal domain. The Zn(2+) site is built by cysteine 32, cysteine 35, cysteine 51, and cysteine 54. A C4-type zinc finger spans residues cysteine 32–cysteine 54.

It belongs to the AccD/PCCB family. In terms of assembly, acetyl-CoA carboxylase is a heterohexamer composed of biotin carboxyl carrier protein (AccB), biotin carboxylase (AccC) and two subunits each of ACCase subunit alpha (AccA) and ACCase subunit beta (AccD). Zn(2+) is required as a cofactor.

The protein localises to the cytoplasm. It catalyses the reaction N(6)-carboxybiotinyl-L-lysyl-[protein] + acetyl-CoA = N(6)-biotinyl-L-lysyl-[protein] + malonyl-CoA. The protein operates within lipid metabolism; malonyl-CoA biosynthesis; malonyl-CoA from acetyl-CoA: step 1/1. Its function is as follows. Component of the acetyl coenzyme A carboxylase (ACC) complex. Biotin carboxylase (BC) catalyzes the carboxylation of biotin on its carrier protein (BCCP) and then the CO(2) group is transferred by the transcarboxylase to acetyl-CoA to form malonyl-CoA. This is Acetyl-coenzyme A carboxylase carboxyl transferase subunit beta from Shouchella clausii (strain KSM-K16) (Alkalihalobacillus clausii).